We begin with the raw amino-acid sequence, 425 residues long: Tol-Pal system protein TolB (425 aa).

The N-terminal stretch at 1 to 25 (MTRKHILSFALMTALGMTVTSTAFA) is a signal peptide.

This sequence belongs to the TolB family. As to quaternary structure, the Tol-Pal system is composed of five core proteins: the inner membrane proteins TolA, TolQ and TolR, the periplasmic protein TolB and the outer membrane protein Pal. They form a network linking the inner and outer membranes and the peptidoglycan layer.

Its subcellular location is the periplasm. In terms of biological role, part of the Tol-Pal system, which plays a role in outer membrane invagination during cell division and is important for maintaining outer membrane integrity. The sequence is that of Tol-Pal system protein TolB from Acinetobacter baylyi (strain ATCC 33305 / BD413 / ADP1).